The chain runs to 302 residues: Methionyl-tRNA formyltransferase (302 aa).

108–111 (SLLP) lines the (6S)-5,6,7,8-tetrahydrofolate pocket. The segment covering 279–288 (KRPMEPEEFL) has biased composition (basic and acidic residues). Positions 279–302 (KRPMEPEEFLRGFPLPEGSRAHTS) are disordered.

It belongs to the Fmt family.

The catalysed reaction is L-methionyl-tRNA(fMet) + (6R)-10-formyltetrahydrofolate = N-formyl-L-methionyl-tRNA(fMet) + (6S)-5,6,7,8-tetrahydrofolate + H(+). Functionally, attaches a formyl group to the free amino group of methionyl-tRNA(fMet). The formyl group appears to play a dual role in the initiator identity of N-formylmethionyl-tRNA by promoting its recognition by IF2 and preventing the misappropriation of this tRNA by the elongation apparatus. This Cereibacter sphaeroides (strain ATCC 17023 / DSM 158 / JCM 6121 / CCUG 31486 / LMG 2827 / NBRC 12203 / NCIMB 8253 / ATH 2.4.1.) (Rhodobacter sphaeroides) protein is Methionyl-tRNA formyltransferase.